The chain runs to 694 residues: Elongation factor G (694 aa).

In terms of domain architecture, tr-type G spans 8–287; the sequence is EDYRNFGIMA…AVVEFLPAPT (280 aa). Residues 17–24, 86–90, and 140–143 contribute to the GTP site; these read AHIDAGKT, DTPGH, and NKMD.

It belongs to the TRAFAC class translation factor GTPase superfamily. Classic translation factor GTPase family. EF-G/EF-2 subfamily.

Its subcellular location is the cytoplasm. In terms of biological role, catalyzes the GTP-dependent ribosomal translocation step during translation elongation. During this step, the ribosome changes from the pre-translocational (PRE) to the post-translocational (POST) state as the newly formed A-site-bound peptidyl-tRNA and P-site-bound deacylated tRNA move to the P and E sites, respectively. Catalyzes the coordinated movement of the two tRNA molecules, the mRNA and conformational changes in the ribosome. The protein is Elongation factor G of Brucella suis (strain ATCC 23445 / NCTC 10510).